A 399-amino-acid polypeptide reads, in one-letter code: CCA-adding enzyme (399 aa).

Glycine 32 and arginine 35 together coordinate ATP. 2 residues coordinate CTP: glycine 32 and arginine 35. Positions 45 and 47 each coordinate Mg(2+). Residues arginine 116, aspartate 159, arginine 162, arginine 165, and arginine 168 each coordinate ATP. CTP contacts are provided by arginine 116, aspartate 159, arginine 162, arginine 165, and arginine 168.

Belongs to the tRNA nucleotidyltransferase/poly(A) polymerase family. Bacterial CCA-adding enzyme type 3 subfamily. Homodimer. It depends on Mg(2+) as a cofactor.

It catalyses the reaction a tRNA precursor + 2 CTP + ATP = a tRNA with a 3' CCA end + 3 diphosphate. The catalysed reaction is a tRNA with a 3' CCA end + 2 CTP + ATP = a tRNA with a 3' CCACCA end + 3 diphosphate. Its function is as follows. Catalyzes the addition and repair of the essential 3'-terminal CCA sequence in tRNAs without using a nucleic acid template. Adds these three nucleotides in the order of C, C, and A to the tRNA nucleotide-73, using CTP and ATP as substrates and producing inorganic pyrophosphate. tRNA 3'-terminal CCA addition is required both for tRNA processing and repair. Also involved in tRNA surveillance by mediating tandem CCA addition to generate a CCACCA at the 3' terminus of unstable tRNAs. While stable tRNAs receive only 3'-terminal CCA, unstable tRNAs are marked with CCACCA and rapidly degraded. In Streptococcus pneumoniae serotype 19F (strain G54), this protein is CCA-adding enzyme.